The sequence spans 450 residues: tRNA modification GTPase MnmE (450 aa).

R23, E79, and K118 together coordinate (6S)-5-formyl-5,6,7,8-tetrahydrofolate. The TrmE-type G domain maps to 214–374; sequence GITLILVGKP…LKEHILNKVG (161 aa). N224 lines the K(+) pocket. GTP-binding positions include 224 to 229, 243 to 249, and 268 to 271; these read NAGKSS, TSIAGTT, and DTAG. S228 is a binding site for Mg(2+). Positions 243, 245, and 248 each coordinate K(+). A Mg(2+)-binding site is contributed by T249. K450 contributes to the (6S)-5-formyl-5,6,7,8-tetrahydrofolate binding site.

The protein belongs to the TRAFAC class TrmE-Era-EngA-EngB-Septin-like GTPase superfamily. TrmE GTPase family. Homodimer. Heterotetramer of two MnmE and two MnmG subunits. Requires K(+) as cofactor.

It localises to the cytoplasm. Functionally, exhibits a very high intrinsic GTPase hydrolysis rate. Involved in the addition of a carboxymethylaminomethyl (cmnm) group at the wobble position (U34) of certain tRNAs, forming tRNA-cmnm(5)s(2)U34. The protein is tRNA modification GTPase MnmE of Francisella tularensis subsp. tularensis (strain FSC 198).